The primary structure comprises 68 residues: Acylphosphatase (68 aa).

One can recognise an Acylphosphatase-like domain in the interval 3–68 (RIACTVHGRV…RCTAGLPSAP (66 aa)). Catalysis depends on residues Arg-18 and Asn-36.

The protein belongs to the acylphosphatase family.

The enzyme catalyses an acyl phosphate + H2O = a carboxylate + phosphate + H(+). The chain is Acylphosphatase (acyP) from Oleidesulfovibrio alaskensis (strain ATCC BAA-1058 / DSM 17464 / G20) (Desulfovibrio alaskensis).